Consider the following 272-residue polypeptide: Shikimate dehydrogenase (NADP(+)) (272 aa).

Shikimate contacts are provided by residues 14–16 (SLS) and Thr61. The active-site Proton acceptor is Lys65. Asp102 provides a ligand contact to shikimate. NADP(+) is bound by residues 127-131 (GAGGA), 151-156 (NRTPSK), and Leu215. Tyr217 provides a ligand contact to shikimate. Position 239 (Gly239) interacts with NADP(+).

It belongs to the shikimate dehydrogenase family. In terms of assembly, homodimer.

It catalyses the reaction shikimate + NADP(+) = 3-dehydroshikimate + NADPH + H(+). It participates in metabolic intermediate biosynthesis; chorismate biosynthesis; chorismate from D-erythrose 4-phosphate and phosphoenolpyruvate: step 4/7. Involved in the biosynthesis of the chorismate, which leads to the biosynthesis of aromatic amino acids. Catalyzes the reversible NADPH linked reduction of 3-dehydroshikimate (DHSA) to yield shikimate (SA). This Coxiella burnetii (strain CbuK_Q154) (Coxiella burnetii (strain Q154)) protein is Shikimate dehydrogenase (NADP(+)).